We begin with the raw amino-acid sequence, 215 residues long: Adenylate kinase (215 aa).

Glycine 10–threonine 15 serves as a coordination point for ATP. An NMP region spans residues serine 30–valine 59. AMP is bound by residues threonine 31, arginine 36, glutamate 57–valine 59, glycine 82–arginine 85, and glutamine 89. Residues asparagine 123–aspartate 160 form an LID region. Residue arginine 124 participates in ATP binding. Zn(2+) contacts are provided by cysteine 127 and cysteine 130. Valine 133–tyrosine 134 is an ATP binding site. Residues cysteine 147 and cysteine 150 each contribute to the Zn(2+) site. Residues arginine 157 and arginine 168 each contribute to the AMP site. Glutamine 196 is an ATP binding site.

Belongs to the adenylate kinase family. Monomer.

Its subcellular location is the cytoplasm. The enzyme catalyses AMP + ATP = 2 ADP. Its pathway is purine metabolism; AMP biosynthesis via salvage pathway; AMP from ADP: step 1/1. Catalyzes the reversible transfer of the terminal phosphate group between ATP and AMP. Plays an important role in cellular energy homeostasis and in adenine nucleotide metabolism. The polypeptide is Adenylate kinase (Petrotoga mobilis (strain DSM 10674 / SJ95)).